Here is a 119-residue protein sequence, read N- to C-terminus: MSKATNFYLFVLLGVFVALVRTEDEKPPNLTRVPSGLSFSCDGKKPGYYADQQMECQVYHVCTPDNEHAVLLCGPGTIFNQKHLVCDFPSNYACADAAKDADDANAHAFEVKVSPTPVP.

A signal peptide spans 1-22 (MSKATNFYLFVLLGVFVALVRT). One can recognise a Chitin-binding type-2 domain in the interval 38–96 (SFSCDGKKPGYYADQQMECQVYHVCTPDNEHAVLLCGPGTIFNQKHLVCDFPSNYACAD). An intrachain disulfide couples cysteine 73 to cysteine 86.

Belongs to the scoloptoxin-01 family. Post-translationally, contains 3 disulfide bonds. In terms of tissue distribution, expressed by the venom gland.

Its subcellular location is the secreted. In Cormocephalus westwoodi (Westwood's green centipede), this protein is U-scoloptoxin(01)-Cw1a.